Here is a 302-residue protein sequence, read N- to C-terminus: Lipooligosaccharide biosynthesis protein lex-1 (302 aa).

Repeat copies occupy residues 42–45 (SINQ), 46–49 (SINQ), 50–53 (SINQ), 54–57 (SINQ), 58–61 (SINQ), 62–65 (SINQ), and 66–69 (SINQ). A 7 X 4 AA tandem repeats of S-I-N-Q region spans residues 42–69 (SINQSINQSINQSINQSINQSINQSINQ).

The protein belongs to the glycosyltransferase 25 family.

In terms of biological role, involved in extracellular lipooligosaccharide (LOS) biosynthesis and virulence expression. Involved in the synthesis of the oligosaccharide moiety of the LOS molecule by adding GalNAc. The sequence is that of Lipooligosaccharide biosynthesis protein lex-1 (lex1) from Haemophilus influenzae (strain ATCC 51907 / DSM 11121 / KW20 / Rd).